A 442-amino-acid polypeptide reads, in one-letter code: Elongation factor 1-gamma (442 aa).

One can recognise a GST N-terminal domain in the interval 2–87; sequence AAGTLYTYPE…FLSNDALRGS (86 aa). The 129-residue stretch at 88–216 folds into the GST C-terminal domain; it reads TPQASAQVLQ…VKLCEKMAQF (129 aa). 2 stretches are compositionally biased toward basic and acidic residues: residues 224 to 242 and 249 to 263; these read MQPK…KEGG and QEKK…KAAP. The interval 224–273 is disordered; that stretch reads MQPKKEAPAKKEKAGKEGGKQQQPQQEKKEKKKEEKKAAPAEEEMDECEA. The EF-1-gamma C-terminal domain occupies 281–442; it reads AKDPYAHLPK…KSFNQGKIFK (162 aa).

As to quaternary structure, EF-1 is composed of four subunits: alpha, beta, delta, and gamma.

In terms of biological role, probably plays a role in anchoring the complex to other cellular components. This Carassius auratus (Goldfish) protein is Elongation factor 1-gamma (eef1g).